We begin with the raw amino-acid sequence, 99 residues long: Large ribosomal subunit protein bL21 (99 aa).

The protein belongs to the bacterial ribosomal protein bL21 family. Part of the 50S ribosomal subunit. Contacts protein L20.

Functionally, this protein binds to 23S rRNA in the presence of protein L20. This Acholeplasma laidlawii (strain PG-8A) protein is Large ribosomal subunit protein bL21.